A 272-amino-acid polypeptide reads, in one-letter code: Glycosylphosphatidylinositol anchor biosynthesis protein 11 (272 aa).

The span at 21–31 (QSTSTTKSTPG) shows a compositional bias: polar residues. A disordered region spans residues 21–48 (QSTSTTKSTPGSQATESSTTTAGSSSSL). Low complexity predominate over residues 32 to 48 (SQATESSTTTAGSSSSL). A run of 5 helical transmembrane segments spans residues 91-111 (VMLN…LLCL), 145-165 (LLAS…MVLF), 177-197 (FLCA…VHGV), 215-235 (TFGG…PIPL), and 248-268 (ILCG…TLFW).

This sequence belongs to the PIGF family.

The protein localises to the endoplasmic reticulum membrane. Its pathway is glycolipid biosynthesis; glycosylphosphatidylinositol-anchor biosynthesis. Functionally, acts in the GPI biosynthetic pathway between GlcNAc-PI synthesis and GPI transfer to protein. In Neurospora crassa (strain ATCC 24698 / 74-OR23-1A / CBS 708.71 / DSM 1257 / FGSC 987), this protein is Glycosylphosphatidylinositol anchor biosynthesis protein 11 (gpi-11).